Reading from the N-terminus, the 345-residue chain is S-adenosylmethionine:tRNA ribosyltransferase-isomerase (345 aa).

This sequence belongs to the QueA family. In terms of assembly, monomer.

Its subcellular location is the cytoplasm. It catalyses the reaction 7-aminomethyl-7-carbaguanosine(34) in tRNA + S-adenosyl-L-methionine = epoxyqueuosine(34) in tRNA + adenine + L-methionine + 2 H(+). Its pathway is tRNA modification; tRNA-queuosine biosynthesis. In terms of biological role, transfers and isomerizes the ribose moiety from AdoMet to the 7-aminomethyl group of 7-deazaguanine (preQ1-tRNA) to give epoxyqueuosine (oQ-tRNA). This is S-adenosylmethionine:tRNA ribosyltransferase-isomerase from Anaeromyxobacter dehalogenans (strain 2CP-C).